A 310-amino-acid chain; its full sequence is Cytosolic Fe-S cluster assembly factor NUBP1 homolog (310 aa).

The [4Fe-4S] cluster site is built by C12, C26, C29, and C35. 66–73 is an ATP binding site; the sequence is GKGGVGKS. 2 residues coordinate [4Fe-4S] cluster: C240 and C243.

Belongs to the Mrp/NBP35 ATP-binding proteins family. NUBP1/NBP35 subfamily. Heterotetramer of 2 NUBP1 and 2 NUBP2 chains. The cofactor is [4Fe-4S] cluster.

It localises to the cytoplasm. Functionally, component of the cytosolic iron-sulfur (Fe/S) protein assembly (CIA) machinery. Required for maturation of extramitochondrial Fe-S proteins. The NUBP1-NUBP2 heterotetramer forms a Fe-S scaffold complex, mediating the de novo assembly of an Fe-S cluster and its transfer to target apoproteins. This chain is Cytosolic Fe-S cluster assembly factor NUBP1 homolog, found in Brugia malayi (Filarial nematode worm).